Here is a 457-residue protein sequence, read N- to C-terminus: Siroheme synthase (457 aa).

Residues 1-204 (MDHLPIFCQL…ADEKAVNATT (204 aa)) form a precorrin-2 dehydrogenase /sirohydrochlorin ferrochelatase region. NAD(+)-binding positions include 22 to 23 (DV) and 43 to 44 (LT). Ser-128 carries the phosphoserine modification. The tract at residues 216-457 (GEVVLVGAGP…RDKLNWFSNH (242 aa)) is uroporphyrinogen-III C-methyltransferase. Pro-225 is a binding site for S-adenosyl-L-methionine. Asp-248 (proton acceptor) is an active-site residue. The Proton donor role is filled by Lys-270. S-adenosyl-L-methionine-binding positions include 301-303 (GGD), Ile-306, 331-332 (TA), Met-382, and Gly-411.

It in the N-terminal section; belongs to the precorrin-2 dehydrogenase / sirohydrochlorin ferrochelatase family. The protein in the C-terminal section; belongs to the precorrin methyltransferase family.

The catalysed reaction is uroporphyrinogen III + 2 S-adenosyl-L-methionine = precorrin-2 + 2 S-adenosyl-L-homocysteine + H(+). The enzyme catalyses precorrin-2 + NAD(+) = sirohydrochlorin + NADH + 2 H(+). It catalyses the reaction siroheme + 2 H(+) = sirohydrochlorin + Fe(2+). Its pathway is cofactor biosynthesis; adenosylcobalamin biosynthesis; precorrin-2 from uroporphyrinogen III: step 1/1. It participates in cofactor biosynthesis; adenosylcobalamin biosynthesis; sirohydrochlorin from precorrin-2: step 1/1. It functions in the pathway porphyrin-containing compound metabolism; siroheme biosynthesis; precorrin-2 from uroporphyrinogen III: step 1/1. The protein operates within porphyrin-containing compound metabolism; siroheme biosynthesis; siroheme from sirohydrochlorin: step 1/1. Its pathway is porphyrin-containing compound metabolism; siroheme biosynthesis; sirohydrochlorin from precorrin-2: step 1/1. Multifunctional enzyme that catalyzes the SAM-dependent methylations of uroporphyrinogen III at position C-2 and C-7 to form precorrin-2 via precorrin-1. Then it catalyzes the NAD-dependent ring dehydrogenation of precorrin-2 to yield sirohydrochlorin. Finally, it catalyzes the ferrochelation of sirohydrochlorin to yield siroheme. The sequence is that of Siroheme synthase from Salmonella schwarzengrund (strain CVM19633).